The following is a 363-amino-acid chain: Ankyrin repeat domain-containing protein 40 (363 aa).

Methionine 1 carries the N-acetylmethionine modification. ANK repeat units follow at residues 9–38 (EQQE…DVNS) and 43–72 (NGWT…DREI). The segment at 135-167 (DSTQLQNGGPSPPPVSPPADSSPPLLPPTETPL) is disordered. The segment covering 144-164 (PSPPPVSPPADSSPPLLPPTE) has biased composition (pro residues). Position 176 is a phosphoserine (serine 176).

This Mus musculus (Mouse) protein is Ankyrin repeat domain-containing protein 40 (Ankrd40).